Here is a 314-residue protein sequence, read N- to C-terminus: Olfactory receptor 5I1 (314 aa).

At 1–27 (MEFTDRNYTLVTEFILLGFPTRPELQI) the chain is on the extracellular side. An N-linked (GlcNAc...) asparagine glycan is attached at asparagine 7. A helical membrane pass occupies residues 28–48 (VLFLMFLTLYAIILIGNIGLM). Residues 49-56 (LLIRIDPH) are Cytoplasmic-facing. Residues 57 to 77 (LQTPMYFFLSNLSFVDLCYFS) form a helical membrane-spanning segment. Topologically, residues 78–101 (DIVPKMLVNFLSENKSISYYGCAL) are extracellular. Residues cysteine 99 and cysteine 191 are joined by a disulfide bond. The helical transmembrane segment at 102-122 (QFYFFCTFADTESFILAAMAY) threads the bilayer. Topologically, residues 123-141 (DRYVAICNPLLYTVVMSRG) are cytoplasmic. Residues 142 to 162 (ICMRLIVLSYLGGNMSSLVHT) form a helical membrane-spanning segment. Residues 163–198 (SFAFILKYCDKNVINHFFCDLPPLLKLSCTDTTINE) are Extracellular-facing. A helical transmembrane segment spans residues 199 to 219 (WLLSTYGSSVEIICFIIIIIS). The Cytoplasmic segment spans residues 220–239 (YFFILLSVLKIRSFSGRKKT). The chain crosses the membrane as a helical span at residues 240–260 (FSTCASHLTSVTIYQGTLLFI). Topologically, residues 261 to 273 (YSRPSYLYSPNTD) are extracellular. Residues 274–294 (KIISVFYTIFIPVLNPLIYSL) traverse the membrane as a helical segment. The Cytoplasmic segment spans residues 295 to 314 (RNKDVKDAAEKVLRSKVDSS).

Belongs to the G-protein coupled receptor 1 family.

The protein localises to the cell membrane. Functionally, odorant receptor. The sequence is that of Olfactory receptor 5I1 (OR5I1) from Homo sapiens (Human).